The following is a 429-amino-acid chain: 3-isopropylmalate dehydratase large subunit (429 aa).

Cys-303, Cys-363, and Cys-366 together coordinate [4Fe-4S] cluster.

The protein belongs to the aconitase/IPM isomerase family. LeuC type 2 subfamily. As to quaternary structure, heterodimer of LeuC and LeuD. It depends on [4Fe-4S] cluster as a cofactor.

The catalysed reaction is (2R,3S)-3-isopropylmalate = (2S)-2-isopropylmalate. Its pathway is amino-acid biosynthesis; L-leucine biosynthesis; L-leucine from 3-methyl-2-oxobutanoate: step 2/4. Its function is as follows. Catalyzes the isomerization between 2-isopropylmalate and 3-isopropylmalate, via the formation of 2-isopropylmaleate. This Caldicellulosiruptor saccharolyticus (strain ATCC 43494 / DSM 8903 / Tp8T 6331) protein is 3-isopropylmalate dehydratase large subunit.